The chain runs to 274 residues: HTH-type transcriptional regulator GadX (274 aa).

Positions Thr-145–Arg-242 constitute an HTH araC/xylS-type domain. 2 DNA-binding regions (H-T-H motif) span residues Ala-162 to Glu-183 and Ile-209 to Tyr-232.

As to quaternary structure, homodimer.

Functionally, positively regulates the expression of about fifteen genes involved in acid resistance such as gadA, gadB and gadC. Depending on the conditions (growth phase and medium), can repress gadW. In Escherichia coli O157:H7, this protein is HTH-type transcriptional regulator GadX (gadX).